Consider the following 284-residue polypeptide: MDAIKKKMQAMKVDRENAQDLAEQMEQKLKDTETAKAKLEEDFNDLQKKLTTTENNFDVANEQLQEANTKLENSDKQITQLESDVGALQRRLQLLEEDFERSEEKLATTTEKLEEASKAADESERNRKVLEGRSNTAEERIDVLEKQLETAKNVATDADQKFDEAARKLAITEVDLERAETRLEAADAKVHELEEELTVVGANIKTLQVQNDQASQREDSYEETIRDLSKNLKDAETRATEAERQLTKLQKEVDRLEDELLAEKERYKAISDELDQTFAEIAGY.

A coiled-coil region spans residues Met-1–Tyr-284. Residues Glu-103–Arg-133 are disordered.

Belongs to the tropomyosin family. As to quaternary structure, homodimer.

Its function is as follows. Tropomyosin, in association with the troponin complex, plays a central role in the calcium dependent regulation of muscle contraction. This is Tropomyosin from Chlamys nipponensis akazara (Akazara scallop).